Reading from the N-terminus, the 1956-residue chain is MSFKEAKPGERGKNPEDHGRKQTASWINGMEAGNQPSTSGEKKSHHWRSYKLIIDPALRKGQHKLYRYDGLSFSMPNSGVPPVDSVRDPRIGRIWTKTKELDLPVPKLKIDEFYVGPVPPKQVTFAKLNDNIRENFLGDMCKKYGEVEEVEILYNPKNKKHLGIAKVIFASVKGARDAVKHLHNTSVMGNIIHVELDTKGETRMRFYDLLVNGFYTPQTLPVGSDLDASPTVNETPQVVESVKRTKETAIGPSVTPNSSTPFSHDTAYSSSRQGTPNSYSQFTPQSQGTPHTPRLGTPFSQDSSYSSRQTTPAFHYGQDSGFKPRRHENKFTDAYNRRPGHHYVHSSGSYRGTEHTFNVTRPQPEPVQVPRTPPLSHSSGNYKSAFSPYQGNTVFPQTDESQYPQTSRDMEYRRTGPQTSDSYSDAGCNSASLELKPVKEKPEEPPPPEPDSTTEQKASFSQTPERCETPGTPTLEAELQHNSLDTRIAMLLKEQRTQLHLIAGDQNSDNEIRMEGSPISSSSSQLSPIPPYSSGSRYQDVTPSSRPSSTGLEDISPTPLPDSDDDDEPIPGTASLCQNSRSASPIDQINQSGRKTESLDKKELVAGDETPTSEKMDEGHPSSGEDMEISDDEVTPSPITSAECAITSSSVISSVIPIPPPGFPPLPPPPPPQPGFPMPPPLPPPPPPTHPSVTVPPPPLPAPPGVPPHHILHHPPPYHHFPVMQGEMMNVLGNHWGGMTMSFQMQTQMLSRMMQGQGSYPYHHFMGGSMQFGNQHPYRPFAISAHLTRGQPWPPFPKFDPSVPPPGYEHKKEDPHKATVDGVLQVIVKELKAIMKRDLNRKMVEVVAFRAFDEWWDKKERLAKQSLTPVKSGESKEEDKQKTKEHITSSLLESWNKGEGLGFEGIGLGIGLRGAIRLPSFKVKRKEPPDAALAGDQKRIRPSHSVDDEDEESERDRDISSTASDLSKKDADAVNNRRRPARPLDSEGEEEVESEGDDGETSDKEDSSSEKEDQDDGSVSALSSKKQLYGDKEGDDEDDDTQSSGKEEDLVSEEEDTTSVASSRAEMDSSDESEESSEYESSSDSDEKEEEDDEEEELVFGDDQSEDQDLGQEYEVETDREEDFFRENLSECSSLPKAGDVELEDEMQKVEEDVARQTTQETLHLRKKNLDVPLVESKECKQDTLDKVEKLFAVPMQEEVFKEHEKAPSPMNEEEEYIELQLEPVPLVPEGAAPAAQEPVIIRPLTPTGAFGETGPVLKLEEPKLQVNLTQFATEDEELYPRTPGRDTAAHSDTEVTFQPGLKVAPSSLPFLPSHNKEEECLLPPEKHAGHLTVTKMLSEEDLPRTPGRDIVVKSSHLGKSQSTETVPATPGSDAPLTGSSLTLTSPHIPGSPFSYLSQSPGIINSGIPRTPGRDFNFTPTFPESNSIFPCHPSGKKPSVDEPDEKSFKEPTSASLTMNSVPSPIPFASPPRGLPHMDIRLGADDLESSDTPAYLSDKLLSEESECEFTKVHLTSTDESAPSPPLPPAEKRKGDRSKKPLSAHEFETEKNYETSSAVAMSEGALGKQMFIGQPDAVSGIKDPAAVPLDFRNDSLSENTVHEPIIQKVPLKELENQWNEVLKEEEDITKHKKSRNSRHNNRYDEFSTVPSPEFSPPRAMFKPRSEFEEMTILYDIWNGGIDDEDIKYMCITYDRLLQQDNGMDWLNDTLWVYHPSTSVYSPKKKKRDDGLREHVTGCARSEGYYKIDKKDKLKYLINNRSLTEELPIDTQGKSIPAQPQASTRAGSERRSEQRRLLSSFTGSCDSDLLKFNQLKFRKKKLRFCKSHIHDWGLFAMEPIIADEMVIEYVGQNIRQVIADMREKRYEDEGIGSSYMFRVDHDTIIDATKCGNFARFINHSCNPNCYAKVITVESQKKIVIYSKQYINVNEEITYDYKFPIEDVKIPCLCGAENCRGTLN.

A compositionally biased stretch (basic and acidic residues) spans 1–20 (MSFKEAKPGERGKNPEDHGR). The segment at 1–46 (MSFKEAKPGERGKNPEDHGRKQTASWINGMEAGNQPSTSGEKKSHH) is disordered. Positions 111–199 (DEFYVGPVPP…NIIHVELDTK (89 aa)) constitute an RRM domain. Disordered stretches follow at residues 226-478 (LDAS…LEAE), 502-637 (IAGD…VTPS), 662-696 (GFPPLPPPPPPQPGFPMPPPLPPPPPPTHPSVTVP), 926-1148 (KEPP…DEMQ), 1341-1386 (EDLP…TLTS), 1420-1464 (PTFP…VPSP), 1512-1553 (HLTS…NYET), 1627-1655 (TKHKKSRNSRHNNRYDEFSTVPSPEFSPP), and 1766-1790 (IDTQGKSIPAQPQASTRAGSERRSE). Polar residues-rich tracts occupy residues 254–290 (VTPNSSTPFSHDTAYSSSRQGTPNSYSQFTPQSQGTP), 298–312 (PFSQDSSYSSRQTTP), and 346–361 (SSGSYRGTEHTFNVTR). Pro residues predominate over residues 363–373 (QPEPVQVPRTP). Polar residues-rich tracts occupy residues 375 to 407 (LSHSSGNYKSAFSPYQGNTVFPQTDESQYPQTS), 416 to 432 (GPQTSDSYSDAGCNSAS), and 451 to 464 (DSTTEQKASFSQTP). Positions 517–527 (SPISSSSSQLS) are enriched in low complexity. Polar residues-rich tracts occupy residues 535-551 (GSRYQDVTPSSRPSSTG) and 575-593 (SLCQNSRSASPIDQINQSG). Residues 594-605 (RKTESLDKKELV) show a composition bias toward basic and acidic residues. Residues 625–634 (EDMEISDDEV) show a composition bias toward acidic residues. The span at 986–1000 (SEGEEEVESEGDDGE) shows a compositional bias: acidic residues. Residues 1001 to 1011 (TSDKEDSSSEK) are compositionally biased toward basic and acidic residues. Acidic residues predominate over residues 1068-1122 (DSSDESEESSEYESSSDSDEKEEEDDEEEELVFGDDQSEDQDLGQEYEVETDREE). Basic and acidic residues predominate over residues 1341 to 1352 (EDLPRTPGRDIV). Composition is skewed to polar residues over residues 1358-1367 (LGKSQSTETV) and 1450-1462 (EPTSASLTMNSVP). Over residues 1541–1551 (SAHEFETEKNY) the composition is skewed to basic and acidic residues. Residues 1628 to 1638 (KHKKSRNSRHN) are compositionally biased toward basic residues. The span at 1769-1783 (QGKSIPAQPQASTRA) shows a compositional bias: polar residues. Positions 1788–1793 (RSEQRR) match the RxxxRR motif motif. Residues 1817–1934 (KKLRFCKSHI…VNEEITYDYK (118 aa)) enclose the SET domain. Tyr1933 provides a ligand contact to S-adenosyl-L-methionine. Positions 1940 to 1956 (VKIPCLCGAENCRGTLN) constitute a Post-SET domain.

It belongs to the class V-like SAM-binding methyltransferase superfamily. Component of the SET1B/COMPASS complex.

The protein localises to the nucleus speckle. It is found in the chromosome. The catalysed reaction is L-lysyl(4)-[histone H3] + 3 S-adenosyl-L-methionine = N(6),N(6),N(6)-trimethyl-L-lysyl(4)-[histone H3] + 3 S-adenosyl-L-homocysteine + 3 H(+). Its function is as follows. Histone methyltransferase that specifically methylates 'Lys-4' of histone H3, when part of the SET1 histone methyltransferase (HMT) complex, but not if the neighboring 'Lys-9' residue is already methylated. H3 'Lys-4' methylation represents a specific tag for epigenetic transcriptional activation. In Xenopus tropicalis (Western clawed frog), this protein is Histone-lysine N-methyltransferase SETD1B (setd1b).